A 253-amino-acid chain; its full sequence is Bridging integrator 3 (253 aa).

Residues 9–232 (GQPKKQIVSK…LDQPGHSDEQ (224 aa)) enclose the BAR domain. Coiled-coil stretches lie at residues 16 to 57 (VSKT…AMSK) and 120 to 151 (SLNM…KEKT). The tract at residues 222 to 241 (QLDQPGHSDEQRERENETKL) is disordered. Residues 227–241 (GHSDEQRERENETKL) are compositionally biased toward basic and acidic residues.

It is found in the cytoplasm. Its subcellular location is the cytoskeleton. Its function is as follows. Involved in cytokinesis and septation where it has a role in the localization of F-actin. This Mus musculus (Mouse) protein is Bridging integrator 3 (Bin3).